Reading from the N-terminus, the 1282-residue chain is Ribosome biogenesis protein BMS1 homolog (1282 aa).

Residues 1–24 (MEAKDQKKHRKKNSGPKAAKKKKR) are compositionally biased toward basic residues. The tract at residues 1 to 43 (MEAKDQKKHRKKNSGPKAAKKKKRLLQDLQLGDEEDARKRNPK) is disordered. Residue Lys-43 forms a Glycyl lysine isopeptide (Lys-Gly) (interchain with G-Cter in SUMO2) linkage. The region spanning 80-245 (PPPIVVVVMG…GRFITVMKFR (166 aa)) is the Bms1-type G domain. The G1 stretch occupies residues 89–96 (GPPKVGKS). 89-96 (GPPKVGKS) provides a ligand contact to ATP. A G2 region spans residues 117 to 121 (PVTIV). The interval 132 to 135 (ECGC) is G3. Residues 184 to 187 (THLD) form a G4 region. At Ser-188 the chain carries Phosphoserine. The interval 219–228 (LSGMVHGEYQ) is G5. 2 disordered regions span residues 397–557 (DSKP…ANCQ) and 575–667 (PTFD…ALKW). Glycyl lysine isopeptide (Lys-Gly) (interchain with G-Cter in SUMO2) cross-links involve residues Lys-399 and Lys-415. Composition is skewed to acidic residues over residues 434–472 (GDEDESGDSDDEEDDEMSEDDGLENGSSDEEAEEEENAE) and 503–531 (DSDDDLERSSAEEGEAEEADESSEEEDCT). Residues 535 to 550 (KGISGSKAAGEGSKAG) show a composition bias toward low complexity. Ser-552 carries the phosphoserine modification. Over residues 588-610 (FASEDESEESSSLSAEEEDSENE) the composition is skewed to acidic residues. Ser-625 and Ser-639 each carry phosphoserine. A Glycyl lysine isopeptide (Lys-Gly) (interchain with G-Cter in SUMO2) cross-link involves residue Lys-646. A compositionally biased stretch (basic and acidic residues) spans 653–667 (EENNDSKETSGALKW). A Phosphothreonine modification is found at Thr-708. Disordered regions lie at residues 787-822 (ETGDVHKGKSGPNTQNEDIEKEVKEEIDPDEEESAK) and 1178-1202 (NKPKTQAKAGKVPKDRRRPAVIREP). Lys-810 is covalently cross-linked (Glycyl lysine isopeptide (Lys-Gly) (interchain with G-Cter in SUMO1); alternate). A Glycyl lysine isopeptide (Lys-Gly) (interchain with G-Cter in SUMO2); alternate cross-link involves residue Lys-810. Lys-1206 participates in a covalent cross-link: Glycyl lysine isopeptide (Lys-Gly) (interchain with G-Cter in SUMO2). The tract at residues 1219-1282 (SQKMKKAKEQ…SLKGAEGQLQ (64 aa)) is disordered. Basic and acidic residues predominate over residues 1228 to 1248 (QRHLHNKEHFRAKQKEEEEKL). Residues 1249–1259 (KRQKDLRKKLF) are compositionally biased toward basic residues.

Belongs to the TRAFAC class translation factor GTPase superfamily. Bms1-like GTPase family. BMS1 subfamily. In terms of assembly, part of the small subunit (SSU) processome, composed of more than 70 proteins and the RNA chaperone small nucleolar RNA (snoRNA) U3. Interacts with RCL1.

It localises to the nucleus. The protein resides in the nucleolus. It catalyses the reaction GTP + H2O = GDP + phosphate + H(+). Functionally, GTPase required for the synthesis of 40S ribosomal subunits and for processing of pre-ribosomal RNA (pre-rRNA) at sites A0, A1, and A2. Controls access of pre-rRNA intermediates to RCL1 during ribosome biogenesis by binding RCL1 in a GTP-dependent manner, and delivering it to pre-ribosomes. GTP-binding and/or GTP hydrolysis may induce conformational rearrangements within the BMS1-RCL1 complex allowing the interaction of RCL1 with its RNA substrate. Required for RCL1 import into the nucleus. The chain is Ribosome biogenesis protein BMS1 homolog from Homo sapiens (Human).